Consider the following 396-residue polypeptide: Elongation factor Tu (396 aa).

Positions 10-205 constitute a tr-type G domain; sequence KPHVNIGTIG…AVDESIPAPV (196 aa). The interval 19-26 is G1; that stretch reads GHVDHGKT. 19–26 is a binding site for GTP; sequence GHVDHGKT. T26 serves as a coordination point for Mg(2+). The segment at 62–66 is G2; it reads GITIN. Residues 83–86 are G3; that stretch reads DAPG. GTP-binding positions include 83 to 87 and 138 to 141; these read DAPGH and NKSD. The tract at residues 138–141 is G4; sequence NKSD. The segment at 175-177 is G5; sequence SAL.

Belongs to the TRAFAC class translation factor GTPase superfamily. Classic translation factor GTPase family. EF-Tu/EF-1A subfamily. As to quaternary structure, monomer.

The protein resides in the cytoplasm. It carries out the reaction GTP + H2O = GDP + phosphate + H(+). Its function is as follows. GTP hydrolase that promotes the GTP-dependent binding of aminoacyl-tRNA to the A-site of ribosomes during protein biosynthesis. The protein is Elongation factor Tu of Mycobacterium leprae (strain Br4923).